Consider the following 138-residue polypeptide: Small ribosomal subunit protein uS17 (138 aa).

2 stretches are compositionally biased toward basic and acidic residues: residues 1–18 and 43–55; these read MSEE…RAEA and AFDR…QKDT. Residues 1-62 are disordered; it reads MSEEERNRGA…KDTRRGRRKE (62 aa).

This sequence belongs to the universal ribosomal protein uS17 family. In terms of assembly, part of the 30S ribosomal subunit.

Its function is as follows. One of the primary rRNA binding proteins, it binds specifically to the 5'-end of 16S ribosomal RNA. This Rubrobacter xylanophilus (strain DSM 9941 / JCM 11954 / NBRC 16129 / PRD-1) protein is Small ribosomal subunit protein uS17.